The primary structure comprises 563 residues: Phosphomethylpyrimidine synthase (563 aa).

Substrate-binding positions include N180, M209, Y238, H274, 294 to 296 (SRG), 335 to 338 (DGLR), and E374. H378 lines the Zn(2+) pocket. Substrate is bound at residue Y401. H442 is a binding site for Zn(2+). C522, C525, and C530 together coordinate [4Fe-4S] cluster.

The protein belongs to the ThiC family. Requires [4Fe-4S] cluster as cofactor.

It carries out the reaction 5-amino-1-(5-phospho-beta-D-ribosyl)imidazole + S-adenosyl-L-methionine = 4-amino-2-methyl-5-(phosphooxymethyl)pyrimidine + CO + 5'-deoxyadenosine + formate + L-methionine + 3 H(+). It functions in the pathway cofactor biosynthesis; thiamine diphosphate biosynthesis. Catalyzes the synthesis of the hydroxymethylpyrimidine phosphate (HMP-P) moiety of thiamine from aminoimidazole ribotide (AIR) in a radical S-adenosyl-L-methionine (SAM)-dependent reaction. This is Phosphomethylpyrimidine synthase from Geobacillus thermodenitrificans (strain NG80-2).